We begin with the raw amino-acid sequence, 351 residues long: Type II methyltransferase M.DsaV (351 aa).

Positions 6-312 (LKFIDLFAGI…QKMLSYIDLT (307 aa)) constitute an SAM-dependent MTase C5-type domain. The active site involves C75.

It belongs to the class I-like SAM-binding methyltransferase superfamily. C5-methyltransferase family.

The catalysed reaction is a 2'-deoxycytidine in DNA + S-adenosyl-L-methionine = a 5-methyl-2'-deoxycytidine in DNA + S-adenosyl-L-homocysteine + H(+). Functionally, a methylase, recognizes the double-stranded sequence 5'-CCNGG-3', methylates C-2 on both strands, and protects the DNA from cleavage by the DsaV endonuclease. The polypeptide is Type II methyltransferase M.DsaV (Dactylococcopsis salina (Myxobaktron salinum)).